The following is a 295-amino-acid chain: F-box protein SKIP24 (295 aa).

The region spanning 19–66 (VKSSTFSYKDLCCISISSRRLFRLSCDDSLWDLLLVHDFPNHIVSASS) is the F-box; degenerate domain. 2 coiled-coil regions span residues 82 to 129 (REKE…SSLQ) and 167 to 209 (EGRL…ESMK). The tract at residues 217–245 (KSIRNGDQGSNGKTKKLKTSINYSGDQVS) is disordered. The segment covering 235–245 (TSINYSGDQVS) has biased composition (polar residues).

As to quaternary structure, part of a SCF (ASK-cullin-F-box) protein ligase complex. Interacts with SKP1A/ASK1 and SPK1B/ASK2.

The protein operates within protein modification; protein ubiquitination. In terms of biological role, component of SCF(ASK-cullin-F-box) E3 ubiquitin ligase complexes, which may mediate the ubiquitination and subsequent proteasomal degradation of target proteins. This is F-box protein SKIP24 (SKIP24) from Arabidopsis thaliana (Mouse-ear cress).